A 1323-amino-acid chain; its full sequence is Inositol hexakisphosphate and diphosphoinositol-pentakisphosphate kinase (1323 aa).

Residue 26–27 participates in substrate binding; it reads RK. Residues Arg-109, Lys-162, His-169, Arg-188, 212-215, and 221-223 each bind ATP; these read EEFI and DVK. 188–189 is a binding site for substrate; that stretch reads RK. Positions 223 and 237 each coordinate substrate. ATP-binding positions include Asp-284 and 296-298; that span reads DVN. 301–304 contributes to the substrate binding site; the sequence is SFVK. The tract at residues 355-426 is polyphosphoinositide-binding domain; it reads TTPSGKLAEL…VLELARALVI (72 aa). 2 stretches are compositionally biased toward polar residues: residues 933 to 947 and 977 to 992; these read FNLS…SSRS and VTPT…NDDL. Disordered regions lie at residues 933-1022, 1043-1107, and 1134-1155; these read FNLS…SEDD, AMAD…GGGK, and IVIP…ASER. Positions 993–1006 are enriched in low complexity; it reads SISSNAESTAAEST. Residues 1062–1074 show a composition bias toward basic and acidic residues; it reads KSMEEGDKPHGEW. A compositionally biased stretch (low complexity) spans 1090–1101; it reads SNEMESNNESME.

This sequence belongs to the histidine acid phosphatase family. VIP1 subfamily.

It localises to the cytoplasm. It is found in the cytosol. It carries out the reaction 1D-myo-inositol hexakisphosphate + ATP = 1-diphospho-1D-myo-inositol 2,3,4,5,6-pentakisphosphate + ADP. It catalyses the reaction 5-diphospho-1D-myo-inositol 1,2,3,4,6-pentakisphosphate + ATP + H(+) = 1,5-bis(diphospho)-1D-myo-inositol 2,3,4,6-tetrakisphosphate + ADP. Its function is as follows. Bifunctional inositol kinase that acts in concert with the IP6K kinases to synthesize the diphosphate group-containing inositol pyrophosphates diphosphoinositol pentakisphosphate, PP-InsP5, and bis-diphosphoinositol tetrakisphosphate, (PP)2-InsP4. PP-InsP5 and (PP)2-InsP4, also respectively called InsP7 and InsP8, may regulate a variety of cellular processes, including apoptosis, vesicle trafficking, cytoskeletal dynamics, and exocytosis. Phosphorylates inositol hexakisphosphate (InsP6) at position 1 to produce PP-InsP5 which is in turn phosphorylated by IP6Ks to produce (PP)2-InsP4. Alternatively, phosphorylates PP-InsP5 at position 1, produced by IP6Ks from InsP6, to produce (PP)2-InsP4. The polypeptide is Inositol hexakisphosphate and diphosphoinositol-pentakisphosphate kinase (Caenorhabditis elegans).